A 682-amino-acid polypeptide reads, in one-letter code: Methionine--tRNA ligase (682 aa).

The short motif at 15-25 (PYANGAIHLGH) is the 'HIGH' region element. Cys-146, Cys-149, Cys-159, and Cys-162 together coordinate Zn(2+). A 'KMSKS' region motif is present at residues 331–335 (KMSKS). An ATP-binding site is contributed by Lys-334. Residues 580-682 (DFAKLDMRVA…SGVTAGMQVK (103 aa)) form the tRNA-binding domain.

This sequence belongs to the class-I aminoacyl-tRNA synthetase family. MetG type 1 subfamily. In terms of assembly, homodimer. Requires Zn(2+) as cofactor.

Its subcellular location is the cytoplasm. The enzyme catalyses tRNA(Met) + L-methionine + ATP = L-methionyl-tRNA(Met) + AMP + diphosphate. Functionally, is required not only for elongation of protein synthesis but also for the initiation of all mRNA translation through initiator tRNA(fMet) aminoacylation. The sequence is that of Methionine--tRNA ligase from Haemophilus influenzae (strain PittEE).